The following is an 85-amino-acid chain: Anti-neuroexcitation peptide 3 (85 aa).

The first 21 residues, 1-21 (MKLSLLLVISASMLIDGLVNA), serve as a signal peptide directing secretion. The region spanning 22–82 (DGYIRGSNGC…TWKSESNTCG (61 aa)) is the LCN-type CS-alpha/beta domain. 4 cysteine pairs are disulfide-bonded: Cys31–Cys81, Cys35–Cys56, Cys42–Cys63, and Cys46–Cys65.

Belongs to the long (4 C-C) scorpion toxin superfamily. Sodium channel inhibitor family. Beta subfamily. As to expression, expressed by the venom gland.

It is found in the secreted. In terms of biological role, binds to sodium channels (Nav) and inhibits them. Recombinant ANEP delays the convulsion seizure of model animals by 18% and shows anti-neuroexcitatory activity. The polypeptide is Anti-neuroexcitation peptide 3 (Olivierus martensii (Manchurian scorpion)).